The primary structure comprises 615 residues: Vitamin B12 transporter BtuB (615 aa).

An N-terminal signal peptide occupies residues methionine 1–alanine 20. The TonB box signature appears at asparagine 26 to asparagine 33. One can recognise a TBDR plug domain in the interval proline 38–threonine 152. Residues serine 85, asparagine 92, and isoleucine 110–serine 111 contribute to the cyanocob(III)alamin site. The region spanning lysine 155 to phenylalanine 615 is the TBDR beta-barrel domain. The next 3 membrane-spanning stretches (beta stranded) occupy residues threonine 158–glycine 165, tyrosine 169–glutamine 178, and threonine 184–threonine 195. Positions 199, 210, 212, and 214 each coordinate Ca(2+). Beta stranded transmembrane passes span phenylalanine 216–glutamate 226 and aspartate 231–aspartate 247. Ca(2+) is bound by residues tyrosine 248, aspartate 249, and aspartate 255. 14 consecutive transmembrane segments (beta stranded) span residues arginine 257–glutamine 271, glycine 273–aspartate 290, threonine 303–glutamine 319, alanine 322–tryptophan 331, glutamate 347–alanine 363, isoleucine 365–aspartate 375, phenylalanine 379–isoleucine 394, tyrosine 397–asparagine 411, glutamate 429–glutamate 438, valine 444–asparagine 453, valine 468–phenylalanine 486, proline 490–alanine 505, arginine 513–tryptophan 525, and aspartate 531–aspartate 546. A cyanocob(III)alamin-binding site is contributed by threonine 303. Arginine 513 contacts cyanocob(III)alamin. Tyrosine 547 is a cyanocob(III)alamin binding site. 3 consecutive transmembrane segments (beta stranded) span residues threonine 559 to serine 573, isoleucine 586 to alanine 597, and alanine 603 to phenylalanine 615. Residues tyrosine 598–phenylalanine 615 carry the TonB C-terminal box motif.

Belongs to the TonB-dependent receptor family. BtuB (TC 1.B.14.3.1) subfamily.

Its subcellular location is the cell outer membrane. Functionally, involved in the active translocation of vitamin B12 (cyanocobalamin) across the outer membrane to the periplasmic space. It derives its energy for transport by interacting with the trans-periplasmic membrane protein TonB. This Pectobacterium atrosepticum (strain SCRI 1043 / ATCC BAA-672) (Erwinia carotovora subsp. atroseptica) protein is Vitamin B12 transporter BtuB.